Consider the following 317-residue polypeptide: MGEVQREKVAVIIGPTAVGKTKLSIDLAKALNGEIISGDSMQIYRTMDIGTAKVTKAEMDGIPHYMIDIKNPEDSFSVAEFQERVRKHIREITERGKLPIIVGGTGLYIQSVLFDYQFTDDAGDVIYREQREKLALERGVEYVHEKLQEVDPESAERIHANNVRRVIRALEIFHTTGEKMSEQIEKQEKELLYDVSLIGLTMDREMLYDRINLRVDLMMEQGLLEEVEGLYNRGIRDCQSIQAIGYKEIYDYFENRASLEDAVSQLKTNSRRYAKRQLTWFRNKMDVTWFDVTDGEKTSEILRYIEGKLQVKSNNSK.

An ATP-binding site is contributed by 14–21 (GPTAVGKT). Substrate is bound at residue 16–21 (TAVGKT). The tract at residues 39–42 (DSMQ) is interaction with substrate tRNA.

Belongs to the IPP transferase family. As to quaternary structure, monomer. Mg(2+) is required as a cofactor.

It catalyses the reaction adenosine(37) in tRNA + dimethylallyl diphosphate = N(6)-dimethylallyladenosine(37) in tRNA + diphosphate. Functionally, catalyzes the transfer of a dimethylallyl group onto the adenine at position 37 in tRNAs that read codons beginning with uridine, leading to the formation of N6-(dimethylallyl)adenosine (i(6)A). The polypeptide is tRNA dimethylallyltransferase (Bacillus cereus (strain ATCC 14579 / DSM 31 / CCUG 7414 / JCM 2152 / NBRC 15305 / NCIMB 9373 / NCTC 2599 / NRRL B-3711)).